We begin with the raw amino-acid sequence, 721 residues long: Procollagen-lysine,2-oxoglutarate 5-dioxygenase (721 aa).

The N-terminal stretch at 1–21 (MRIQQSALLLLLLAVTSQGDA) is a signal peptide. N-linked (GlcNAc...) asparagine glycans are attached at residues N504, N530, and N536. The region spanning 627–721 (NPPRALMNFM…RYIMISFIDP (95 aa)) is the Fe2OG dioxygenase domain. H650 and D652 together coordinate Fe cation. The N-linked (GlcNAc...) asparagine glycan is linked to N680. H702 is a binding site for Fe cation. A glycan (N-linked (GlcNAc...) asparagine) is linked at N709. R712 serves as a coordination point for 2-oxoglutarate.

Requires L-ascorbate as cofactor. It depends on Fe(2+) as a cofactor.

The protein localises to the endoplasmic reticulum. It localises to the secreted. The protein resides in the extracellular space. It carries out the reaction L-lysyl-[collagen] + 2-oxoglutarate + O2 = (5R)-5-hydroxy-L-lysyl-[collagen] + succinate + CO2. Its function is as follows. Forms hydroxylysine residues in collagen type IV. Required for the secretion of collagen type IV (vkg) from haemocytes, fat body and follicle cells. This is Procollagen-lysine,2-oxoglutarate 5-dioxygenase from Drosophila melanogaster (Fruit fly).